We begin with the raw amino-acid sequence, 732 residues long: 1,4-alpha-glucan branching enzyme GlgB (732 aa).

The Nucleophile role is filled by Asp-408. Catalysis depends on Glu-461, which acts as the Proton donor.

Belongs to the glycosyl hydrolase 13 family. GlgB subfamily. Monomer.

It catalyses the reaction Transfers a segment of a (1-&gt;4)-alpha-D-glucan chain to a primary hydroxy group in a similar glucan chain.. The protein operates within glycan biosynthesis; glycogen biosynthesis. Its function is as follows. Catalyzes the formation of the alpha-1,6-glucosidic linkages in glycogen by scission of a 1,4-alpha-linked oligosaccharide from growing alpha-1,4-glucan chains and the subsequent attachment of the oligosaccharide to the alpha-1,6 position. This Rhodococcus jostii (strain RHA1) protein is 1,4-alpha-glucan branching enzyme GlgB.